Consider the following 142-residue polypeptide: Hemoglobin subunit alpha (142 aa).

The Globin domain maps to 2–142 (VLSAADKTNV…VSTVLTSKYR (141 aa)). Ser-4 is modified (phosphoserine). At Lys-8 the chain carries N6-succinyllysine. Position 9 is a phosphothreonine (Thr-9). Lys-12 carries the post-translational modification N6-succinyllysine. Position 17 is an N6-acetyllysine; alternate (Lys-17). An N6-succinyllysine; alternate modification is found at Lys-17. At Lys-41 the chain carries N6-succinyllysine. The residue at position 50 (Ser-50) is a Phosphoserine. His-59 serves as a coordination point for O2. His-88 provides a ligand contact to heme b. Ser-103 carries the phosphoserine modification. The residue at position 109 (Thr-109) is a Phosphothreonine. The residue at position 125 (Ser-125) is a Phosphoserine. Phosphothreonine is present on residues Thr-135 and Thr-138. The residue at position 139 (Ser-139) is a Phosphoserine.

The protein belongs to the globin family. As to quaternary structure, heterotetramer of two alpha chains and two beta chains. As to expression, red blood cells.

Functionally, involved in oxygen transport from the lung to the various peripheral tissues. Hemopressin acts as an antagonist peptide of the cannabinoid receptor CNR1. Hemopressin-binding efficiently blocks cannabinoid receptor CNR1 and subsequent signaling. The sequence is that of Hemoglobin subunit alpha (HBA) from Equus zebra (Mountain zebra).